The sequence spans 189 residues: Elongation factor P (189 aa).

At K34 the chain carries N6-(3,6-diaminohexanoyl)-5-hydroxylysine.

Belongs to the elongation factor P family. Post-translationally, may be beta-lysylated on the epsilon-amino group of Lys-34 by the combined action of EpmA and EpmB, and then hydroxylated on the C5 position of the same residue by EpmC (if this protein is present). Lysylation is critical for the stimulatory effect of EF-P on peptide-bond formation. The lysylation moiety may extend toward the peptidyltransferase center and stabilize the terminal 3-CCA end of the tRNA. Hydroxylation of the C5 position on Lys-34 may allow additional potential stabilizing hydrogen-bond interactions with the P-tRNA.

It localises to the cytoplasm. It participates in protein biosynthesis; polypeptide chain elongation. Its function is as follows. Involved in peptide bond synthesis. Alleviates ribosome stalling that occurs when 3 or more consecutive Pro residues or the sequence PPG is present in a protein, possibly by augmenting the peptidyl transferase activity of the ribosome. Modification of Lys-34 is required for alleviation. This Francisella tularensis subsp. novicida (strain U112) protein is Elongation factor P.